A 628-amino-acid chain; its full sequence is Leucine-rich repeat and fibronectin type-III domain-containing protein 3 (628 aa).

The signal sequence occupies residues 1–16; the sequence is MAVLPLLLCLLPLAPA. The Extracellular portion of the chain corresponds to 17–540; the sequence is SSPPQPASPS…APHAPFLGGT (524 aa). Residues 19-59 form the LRRNT domain; that stretch reads PPQPASPSPCPRRCRCQTQSLPLSVLCPGAGLLFVPPSLDR. LRR repeat units lie at residues 60–83, 84–105, 108–129, 132–153, 157–178, 181–202, and 205–226; these read RAAELRLADNFIATVRRRDLANMT, GLLHLSLSRNTIRHVAAGAFSD, ALRALHLDGNRLTSLGEGQLRG, NLRHLILSNNQLAALAAGALDD, TLEDLDLSYNNLEQLPWEALGR, NVNTLGLDHNLLASVPAGAFSR, and KLARLDMTSNRLTTIPPDPLFS. The LRRCT domain occupies 249-295; the sequence is NPLHCNCELVWLRRLAREDDLEACASPPALGGRYFWAVGEEEFVCEP. The region spanning 295–382 is the Ig-like domain; sequence PPVVTHRSPP…GEATAAVELT (88 aa). Cys-317 and Cys-366 are disulfide-bonded. Asn-348 and Asn-393 each carry an N-linked (GlcNAc...) asparagine glycan. The interval 380–433 is disordered; the sequence is ELTVGPPPPPQLANSTSCDPPRDGEPDALTPPSAASASASAKAAEAGPPTDRGV. Low complexity predominate over residues 410 to 428; sequence PPSAASASASAKAAEAGPP. Residues 427-525 enclose the Fibronectin type-III domain; sequence PPTDRGVQVT…GCNRFSTEPA (99 aa). The chain crosses the membrane as a helical span at residues 541 to 561; the sequence is MIIALGGVIVASVLVFIFVLL. Residues 562–628 lie on the Cytoplasmic side of the membrane; the sequence is MRYKVHGGQP…WGPSHEPMGP (67 aa). The disordered stretch occupies residues 570–609; it reads QPPGKTKASAPVSSVCSQTNGALGPMPAPPAPEPSAPRAH. Polar residues predominate over residues 580–590; it reads PVSSVCSQTNG. The span at 595–604 shows a compositional bias: pro residues; that stretch reads MPAPPAPEPS.

Belongs to the LRFN family. Can form heteromeric complexes with LRFN1, LRFN2, LRFN4 and LRFN5. Able to form homomeric complexes across cell junctions, between adjacent cells. Does not interact with DLG4. In terms of processing, N-glycosylated.

The protein localises to the cell membrane. It localises to the cell projection. The protein resides in the axon. It is found in the dendrite. Its subcellular location is the synapse. The protein localises to the presynaptic cell membrane. It localises to the postsynaptic cell membrane. Its function is as follows. Cell adhesion molecule that mediates homophilic cell-cell adhesion in a Ca(2+)-independent manner. Promotes neurite outgrowth in hippocampal neurons. The chain is Leucine-rich repeat and fibronectin type-III domain-containing protein 3 (LRFN3) from Bos taurus (Bovine).